Consider the following 332-residue polypeptide: Beta-ketoacyl-[acyl-carrier-protein] synthase III (332 aa).

Active-site residues include C112 and H252. The segment at 253–257 (QANLR) is ACP-binding. N282 is a catalytic residue.

Belongs to the thiolase-like superfamily. FabH family. As to quaternary structure, homodimer.

It is found in the cytoplasm. It catalyses the reaction malonyl-[ACP] + acetyl-CoA + H(+) = 3-oxobutanoyl-[ACP] + CO2 + CoA. It participates in lipid metabolism; fatty acid biosynthesis. Functionally, catalyzes the condensation reaction of fatty acid synthesis by the addition to an acyl acceptor of two carbons from malonyl-ACP. Catalyzes the first condensation reaction which initiates fatty acid synthesis and may therefore play a role in governing the total rate of fatty acid production. Possesses both acetoacetyl-ACP synthase and acetyl transacylase activities. Its substrate specificity determines the biosynthesis of branched-chain and/or straight-chain of fatty acids. This chain is Beta-ketoacyl-[acyl-carrier-protein] synthase III, found in Syntrophomonas wolfei subsp. wolfei (strain DSM 2245B / Goettingen).